Reading from the N-terminus, the 151-residue chain is MSVERTFLAIKPDGVQRGLVGEILGRFERKGFKLVGLKQLIPSKELAEKHYGVHKERPFFTGLVGFITSGPVVAMVWEGDGVILSARKLIGATKPLEAEPGTIRGDLGINIGRNVIHGSDGPETASFEIDLWFNSSELNNWNPSDQKWRVE.

6 residues coordinate ATP: Lys11, Phe59, Arg87, Thr93, Arg104, and Asn114. His117 serves as the catalytic Pros-phosphohistidine intermediate.

Belongs to the NDK family. Homotetramer. The cofactor is Mg(2+).

The protein localises to the cytoplasm. It catalyses the reaction a 2'-deoxyribonucleoside 5'-diphosphate + ATP = a 2'-deoxyribonucleoside 5'-triphosphate + ADP. The enzyme catalyses a ribonucleoside 5'-diphosphate + ATP = a ribonucleoside 5'-triphosphate + ADP. In terms of biological role, major role in the synthesis of nucleoside triphosphates other than ATP. The ATP gamma phosphate is transferred to the NDP beta phosphate via a ping-pong mechanism, using a phosphorylated active-site intermediate. This is Nucleoside diphosphate kinase from Prochlorococcus marinus (strain SARG / CCMP1375 / SS120).